The chain runs to 142 residues: Type IV pilus subunit protein TapA (142 aa).

A propeptide spans 1 to 6 (MKKQSG) (leader sequence). At Phe-7 the chain carries N-methylphenylalanine. The helical transmembrane segment at 7 to 27 (FTLIELMIVVAIVAILAAIAL) threads the bilayer.

The protein belongs to the N-Me-Phe pilin family.

Its subcellular location is the membrane. Major component of the type IV (TAP) pilus. Aeromonas hydrophila possesses two distinct families of type IV pili: the bundle-forming pilus (Bfp) and the type IV pilus (Tap). The chain is Type IV pilus subunit protein TapA (tapA) from Aeromonas hydrophila.